The sequence spans 323 residues: MRIGQYQLKNCLIAAPMAGVTDRPFRSLCYDMGAGMTVSEMLSSNPQVWQTDKSRLRMVHSDELGIRSVQIAGSDPVDMAAAAKINADSGAQIIDINMGCPAKKVNKKLAGSALLRHPDLVAEILSAVVNAVDVPVTLKIRTGWSPDERNCVEIAKLAERCGIQALTIHGRTRECLFKGEAEYDSIRTVKQNVSIPIIANGDITDPLKARAVLDYTGADALMIGRAAQGRPWIFREIQHYLDTGELLPPLPIAEVQQIMQKHVRELHDFYGQGKGTRIARKHVSWYLKEHAPDDQFRRSFNAIEDASEQLEALEAYFENFLRK.

Residues 16–18 (PMA) and Q70 contribute to the FMN site. C100 (proton donor) is an active-site residue. Residues K139, 200 to 202 (NGD), and 224 to 225 (GR) each bind FMN.

This sequence belongs to the Dus family. DusB subfamily. FMN is required as a cofactor.

It carries out the reaction a 5,6-dihydrouridine in tRNA + NAD(+) = a uridine in tRNA + NADH + H(+). The catalysed reaction is a 5,6-dihydrouridine in tRNA + NADP(+) = a uridine in tRNA + NADPH + H(+). Functionally, catalyzes the synthesis of 5,6-dihydrouridine (D), a modified base found in the D-loop of most tRNAs, via the reduction of the C5-C6 double bond in target uridines. The polypeptide is tRNA-dihydrouridine synthase B (Proteus vulgaris).